A 503-amino-acid polypeptide reads, in one-letter code: MEIRAEEISEIIRKQIKEYGKEVEVAETGTIISVGDGIARIHGLDKAMAGELLEFPGGVSGMVLNLEEDNVGAAILGEDNENIKEGTTVKRTGRIVEVPVGEALIGRVVNAIGQPIDGKGPINTTTFGKVEVKAPGIVKRKSVHQPMQTGLKAIDSMVPIGRGQRELIIGDRQTGKTAVAIDTIINQKGGDLICIYVAIGQKRSTVAQVVSKLQEYGAMDYTIVVSASASEPAPLQFIAPYTGVTMGEYFRDNGKHALIIYDDLSKQAVAYRQLSLLLRRPPGREAYPGDVFYLHSRLLERAAKLSDDCGAGSLTALPIIETQAGDVSAYIPTNVISITDGQIYLESDLFYSGVRPAINVGLSVSRVGGSAQVKAMKQVAGTLRLNLAQYREMAAFAQFGSDLDKATQMQLARGERLVEILKQPQYRPIPNEKQVLVIFAANNGFVDEYPVSSLRRYESELYSFFDSRKADILAELRDKKAIDDDLKAKMIAALEELKKEFTA.

170-177 is a binding site for ATP; it reads GDRQTGKT.

It belongs to the ATPase alpha/beta chains family. As to quaternary structure, F-type ATPases have 2 components, CF(1) - the catalytic core - and CF(0) - the membrane proton channel. CF(1) has five subunits: alpha(3), beta(3), gamma(1), delta(1), epsilon(1). CF(0) has three main subunits: a(1), b(2) and c(9-12). The alpha and beta chains form an alternating ring which encloses part of the gamma chain. CF(1) is attached to CF(0) by a central stalk formed by the gamma and epsilon chains, while a peripheral stalk is formed by the delta and b chains.

The protein localises to the cell inner membrane. It catalyses the reaction ATP + H2O + 4 H(+)(in) = ADP + phosphate + 5 H(+)(out). In terms of biological role, produces ATP from ADP in the presence of a proton gradient across the membrane. The alpha chain is a regulatory subunit. The chain is ATP synthase subunit alpha from Geobacter sulfurreducens (strain ATCC 51573 / DSM 12127 / PCA).